We begin with the raw amino-acid sequence, 243 residues long: Mitochondrial import inner membrane translocase subunit TIM17-2 (243 aa).

The next 4 helical transmembrane spans lie at 19-36, 66-83, 90-109, and 115-137; these read IGGAFGMGAVGGSAFHFI, FAVWGGLFSTFDCTMVYL, WNSIIAGAATGGFLSMRQGA, and SAIFGGVLLALIEGAGIMLNKVL. Tandem repeats lie at residues 149 to 151, 152 to 154, 155 to 157, 158 to 160, 161 to 163, 164 to 166, 167 to 169, 170 to 172, 173 to 175, and 176 to 178. The interval 149–178 is 10 X approximate repeats GMQ/P; sequence GMQGMPGMQGMQGMPGMPGMQGMPGMQGMQ. Residues 166–183 show a composition bias toward low complexity; sequence PGMQGMPGMQGMQMGQMQ. The disordered stretch occupies residues 166–243; the sequence is PGMQGMPGMQ…APPVPSFEFK (78 aa). The segment covering 184 to 198 has biased composition (polar residues); that stretch reads SQAQIRSESQNQNTA. Residues 211 to 228 show a composition bias toward basic and acidic residues; sequence FDKKKEEVQPGSESKTEV.

The protein belongs to the Tim17/Tim22/Tim23 family. In terms of assembly, component of the TIM17:23 complex at least composed of TIM23, TIM17 and TIM50. The complex interacts with the TIM44 component of the PAM complex. Interacts with TIM23-2. Expressed in roots, flowers, leaves and young cotyledons.

It is found in the mitochondrion inner membrane. The protein localises to the mitochondrion outer membrane. Functionally, essential component of the TIM17:23 complex, a complex that mediates the translocation of transit peptide-containing proteins across the mitochondrial inner membrane. Links the inner and outer membranes. This Arabidopsis thaliana (Mouse-ear cress) protein is Mitochondrial import inner membrane translocase subunit TIM17-2 (TIM17-2).